The sequence spans 216 residues: MIF4G domain-containing protein A (216 aa).

The MIF4G domain maps to 2 to 199 (DSAWTALDME…LEILEFRASG (198 aa)).

Belongs to the MIF4GD family. As to quaternary structure, interacts with eif4g1, eif4g2 and slbp; probably tethered by SLBP to the 3'-end of mRNAs ending with the histone stem-loop, it also interacts with eif4g1 which is bound to their 5'-end.

Its subcellular location is the cytoplasm. The protein localises to the nucleus. In terms of biological role, functions in replication-dependent translation of histone mRNAs which differ from other eukaryotic mRNAs in that they do not end with a poly-A tail but a stem-loop. May participate in circularizing those mRNAs specifically enhancing their translation. This is MIF4G domain-containing protein A (mif4gda) from Danio rerio (Zebrafish).